Consider the following 28-residue polypeptide: Trypsin inhibitor A (28 aa).

3 cysteine pairs are disulfide-bonded: C3–C20, C10–C22, and C16–C27.

The protein belongs to the protease inhibitor I7 (squash-type serine protease inhibitor) family.

The protein resides in the secreted. Functionally, inhibits trypsin. The polypeptide is Trypsin inhibitor A (Momordica charantia (Bitter gourd)).